The following is a 274-amino-acid chain: MQNITQSWFVQGMIKATTDAWLKGWDERNGGNLTLRLDDADIAPYHDNFHQQPRYIPLSQPMPLLANTPFIVTGSGKFFRNVQLDPAANLGIVKVDSDGAGYHILWGLTNEAVPTSELPAHFLSHFERIKATNGKDRVIMHCHATNLIALTYVLENDTAVFTRQLWEGSTECLVVFPDGVGILPWMVPGTDEIGQATAQEMQKHSLVLWPFHGVFGSGPTLDETFGLIDTAEKSAQILVKVYSMSGMKQTISREELIALGQRFGVTPLASALAL.

Glutamate 117 is an active-site residue. Zn(2+)-binding residues include histidine 141, histidine 143, and histidine 212.

This sequence belongs to the aldolase class II family. RhaD subfamily. As to quaternary structure, homotetramer. Zn(2+) serves as cofactor.

It is found in the cytoplasm. It catalyses the reaction L-rhamnulose 1-phosphate = (S)-lactaldehyde + dihydroxyacetone phosphate. It participates in carbohydrate degradation; L-rhamnose degradation; glycerone phosphate from L-rhamnose: step 3/3. Catalyzes the reversible cleavage of L-rhamnulose-1-phosphate to dihydroxyacetone phosphate (DHAP) and L-lactaldehyde. This is Rhamnulose-1-phosphate aldolase from Escherichia coli O81 (strain ED1a).